The chain runs to 215 residues: Cytochrome b6 (215 aa).

Residues 32 to 52 traverse the membrane as a helical segment; sequence IFYCLGGVTLVCFIIQFATGF. Residue Cys-35 coordinates heme c. Heme b contacts are provided by His-86 and His-100. The next 3 helical transmembrane spans lie at 90 to 110, 116 to 136, and 186 to 206; these read ASMM…TGGF, LTWI…VTGY, and LHTF…FLMI. Heme b contacts are provided by His-187 and His-202.

This sequence belongs to the cytochrome b family. PetB subfamily. The 4 large subunits of the cytochrome b6-f complex are cytochrome b6, subunit IV (17 kDa polypeptide, PetD), cytochrome f and the Rieske protein, while the 4 small subunits are PetG, PetL, PetM and PetN. The complex functions as a dimer. Heme b is required as a cofactor. It depends on heme c as a cofactor.

It localises to the cellular thylakoid membrane. In terms of biological role, component of the cytochrome b6-f complex, which mediates electron transfer between photosystem II (PSII) and photosystem I (PSI), cyclic electron flow around PSI, and state transitions. The protein is Cytochrome b6 of Acaryochloris marina (strain MBIC 11017).